The primary structure comprises 418 residues: Gamma-glutamyl phosphate reductase (418 aa).

It belongs to the gamma-glutamyl phosphate reductase family.

It is found in the cytoplasm. It catalyses the reaction L-glutamate 5-semialdehyde + phosphate + NADP(+) = L-glutamyl 5-phosphate + NADPH + H(+). Its pathway is amino-acid biosynthesis; L-proline biosynthesis; L-glutamate 5-semialdehyde from L-glutamate: step 2/2. Its function is as follows. Catalyzes the NADPH-dependent reduction of L-glutamate 5-phosphate into L-glutamate 5-semialdehyde and phosphate. The product spontaneously undergoes cyclization to form 1-pyrroline-5-carboxylate. This Desulfotalea psychrophila (strain LSv54 / DSM 12343) protein is Gamma-glutamyl phosphate reductase.